A 334-amino-acid polypeptide reads, in one-letter code: Dihydroorotate dehydrogenase (quinone) (334 aa).

FMN-binding positions include 59 to 63 (AGLDK) and Thr83. Substrate is bound at residue Lys63. 108–112 (NRMGF) is a binding site for substrate. FMN contacts are provided by Asn136 and Asn169. Substrate is bound at residue Asn169. Ser172 acts as the Nucleophile in catalysis. Position 174 (Asn174) interacts with substrate. FMN is bound by residues Lys214 and Thr242. Substrate is bound at residue 243-244 (NT). FMN-binding positions include Gly265, Gly294, and 315 to 316 (YS).

The protein belongs to the dihydroorotate dehydrogenase family. Type 2 subfamily. In terms of assembly, monomer. It depends on FMN as a cofactor.

The protein resides in the cell membrane. It carries out the reaction (S)-dihydroorotate + a quinone = orotate + a quinol. It participates in pyrimidine metabolism; UMP biosynthesis via de novo pathway; orotate from (S)-dihydroorotate (quinone route): step 1/1. Functionally, catalyzes the conversion of dihydroorotate to orotate with quinone as electron acceptor. This is Dihydroorotate dehydrogenase (quinone) from Acinetobacter baylyi (strain ATCC 33305 / BD413 / ADP1).